The sequence spans 514 residues: 3-octaprenyl-4-hydroxybenzoate carboxy-lyase (514 aa).

Asn-177 provides a ligand contact to Mn(2+). Prenylated FMN-binding positions include 180–182, 194–196, and 199–200; these read IYR, RWL, and RG. Position 243 (Glu-243) interacts with Mn(2+). The active-site Proton donor is Asp-314.

Belongs to the UbiD family. As to quaternary structure, homohexamer. Requires prenylated FMN as cofactor. Mn(2+) is required as a cofactor.

It localises to the cell membrane. The enzyme catalyses a 4-hydroxy-3-(all-trans-polyprenyl)benzoate + H(+) = a 2-(all-trans-polyprenyl)phenol + CO2. The protein operates within cofactor biosynthesis; ubiquinone biosynthesis. Functionally, catalyzes the decarboxylation of 3-octaprenyl-4-hydroxy benzoate to 2-octaprenylphenol, an intermediate step in ubiquinone biosynthesis. The polypeptide is 3-octaprenyl-4-hydroxybenzoate carboxy-lyase (Bordetella pertussis (strain Tohama I / ATCC BAA-589 / NCTC 13251)).